A 177-amino-acid polypeptide reads, in one-letter code: Large ribosomal subunit protein uL5 (177 aa).

This sequence belongs to the universal ribosomal protein uL5 family. In terms of assembly, part of the 50S ribosomal subunit; part of the 5S rRNA/L5/L18/L25 subcomplex. Contacts the 5S rRNA and the P site tRNA. Forms a bridge to the 30S subunit in the 70S ribosome.

Its function is as follows. This is one of the proteins that bind and probably mediate the attachment of the 5S RNA into the large ribosomal subunit, where it forms part of the central protuberance. In the 70S ribosome it contacts protein S13 of the 30S subunit (bridge B1b), connecting the 2 subunits; this bridge is implicated in subunit movement. Contacts the P site tRNA; the 5S rRNA and some of its associated proteins might help stabilize positioning of ribosome-bound tRNAs. This Wolbachia sp. subsp. Brugia malayi (strain TRS) protein is Large ribosomal subunit protein uL5.